We begin with the raw amino-acid sequence, 511 residues long: Glucans biosynthesis protein G (511 aa).

The first 22 residues, 1 to 22 (MMKMRWLGAAIMLTLYASSSWA), serve as a signal peptide directing secretion.

It belongs to the OpgD/OpgG family.

Its subcellular location is the periplasm. The protein operates within glycan metabolism; osmoregulated periplasmic glucan (OPG) biosynthesis. Its function is as follows. Involved in the biosynthesis of osmoregulated periplasmic glucans (OPGs). The protein is Glucans biosynthesis protein G of Salmonella paratyphi A (strain ATCC 9150 / SARB42).